We begin with the raw amino-acid sequence, 158 residues long: Large ribosomal subunit protein uL16 (158 aa).

This sequence belongs to the universal ribosomal protein uL16 family. In terms of assembly, part of the 50S ribosomal subunit.

In terms of biological role, binds 23S rRNA and is also seen to make contacts with the A and possibly P site tRNAs. The protein is Large ribosomal subunit protein uL16 of Synechococcus sp. (strain CC9605).